A 211-amino-acid polypeptide reads, in one-letter code: Thiamine-phosphate synthase (211 aa).

4-amino-2-methyl-5-(diphosphooxymethyl)pyrimidine is bound by residues 44 to 48 (QYRNK) and N75. Residues D76 and D95 each coordinate Mg(2+). S114 serves as a coordination point for 4-amino-2-methyl-5-(diphosphooxymethyl)pyrimidine. 140–142 (TKS) is a 2-[(2R,5Z)-2-carboxy-4-methylthiazol-5(2H)-ylidene]ethyl phosphate binding site. K143 contacts 4-amino-2-methyl-5-(diphosphooxymethyl)pyrimidine. 2-[(2R,5Z)-2-carboxy-4-methylthiazol-5(2H)-ylidene]ethyl phosphate is bound at residue G171.

It belongs to the thiamine-phosphate synthase family. Requires Mg(2+) as cofactor.

The enzyme catalyses 2-[(2R,5Z)-2-carboxy-4-methylthiazol-5(2H)-ylidene]ethyl phosphate + 4-amino-2-methyl-5-(diphosphooxymethyl)pyrimidine + 2 H(+) = thiamine phosphate + CO2 + diphosphate. The catalysed reaction is 2-(2-carboxy-4-methylthiazol-5-yl)ethyl phosphate + 4-amino-2-methyl-5-(diphosphooxymethyl)pyrimidine + 2 H(+) = thiamine phosphate + CO2 + diphosphate. It catalyses the reaction 4-methyl-5-(2-phosphooxyethyl)-thiazole + 4-amino-2-methyl-5-(diphosphooxymethyl)pyrimidine + H(+) = thiamine phosphate + diphosphate. It functions in the pathway cofactor biosynthesis; thiamine diphosphate biosynthesis; thiamine phosphate from 4-amino-2-methyl-5-diphosphomethylpyrimidine and 4-methyl-5-(2-phosphoethyl)-thiazole: step 1/1. Its function is as follows. Condenses 4-methyl-5-(beta-hydroxyethyl)thiazole monophosphate (THZ-P) and 2-methyl-4-amino-5-hydroxymethyl pyrimidine pyrophosphate (HMP-PP) to form thiamine monophosphate (TMP). This chain is Thiamine-phosphate synthase, found in Koribacter versatilis (strain Ellin345).